Consider the following 538-residue polypeptide: Phosphoenolpyruvate carboxykinase (ATP) (538 aa).

Arginine 64 contributes to the substrate binding site. Ca(2+) is bound by residues asparagine 149 and phenylalanine 151. Positions 206 and 212 each coordinate substrate. ATP contacts are provided by residues lysine 212, histidine 231, and 247 to 255; that span reads GLSGTGKTT. Lysine 212 and histidine 231 together coordinate Mn(2+). Aspartate 268 contributes to the Mn(2+) binding site. ATP contacts are provided by residues glutamate 296, arginine 332, 447-448, and threonine 453; that span reads RI. Arginine 332 serves as a coordination point for substrate.

It belongs to the phosphoenolpyruvate carboxykinase (ATP) family. In terms of assembly, monomer. Requires Mn(2+) as cofactor.

The protein resides in the cytoplasm. The catalysed reaction is oxaloacetate + ATP = phosphoenolpyruvate + ADP + CO2. It participates in carbohydrate biosynthesis; gluconeogenesis. With respect to regulation, allosterically activated by calcium. In terms of biological role, involved in the gluconeogenesis. Catalyzes the conversion of oxaloacetate (OAA) to phosphoenolpyruvate (PEP) through direct phosphoryl transfer between the nucleoside triphosphate and OAA. The chain is Phosphoenolpyruvate carboxykinase (ATP) from Salmonella typhimurium (strain LT2 / SGSC1412 / ATCC 700720).